Here is a 387-residue protein sequence, read N- to C-terminus: Alpha-sarcoglycan (387 aa).

An N-terminal signal peptide occupies residues 1-24; sequence MAAAALLWLPLLVGCLAGPGGTEA. The Extracellular portion of the chain corresponds to 25–290; sequence QQTTLYPLVG…ATARDFLADA (266 aa). Asparagine 174 and asparagine 246 each carry an N-linked (GlcNAc...) asparagine glycan. Residues 291-311 traverse the membrane as a helical segment; it reads LVTLLVPLLVALLLALLLAYI. Topologically, residues 312-387 are cytoplasmic; it reads MCCRREGRLK…AQVPLILDQH (76 aa). Phosphoserine is present on serine 377.

This sequence belongs to the sarcoglycan alpha/epsilon family. In terms of assembly, cross-link to form 2 major subcomplexes: one consisting of SGCB, SGCD and SGCG and the other consisting of SGCB and SGCD. The association between SGCB and SGCG is particularly strong while SGCA is loosely associated with the other sarcoglycans. Interacts with the syntrophin SNTA1.

It is found in the cell membrane. Its subcellular location is the sarcolemma. The protein localises to the cytoplasm. It localises to the cytoskeleton. Its function is as follows. Component of the sarcoglycan complex, a subcomplex of the dystrophin-glycoprotein complex which forms a link between the F-actin cytoskeleton and the extracellular matrix. The chain is Alpha-sarcoglycan (SGCA) from Oryctolagus cuniculus (Rabbit).